The following is a 235-amino-acid chain: 2,3,4,5-tetrahydropyridine-2,6-dicarboxylate N-acetyltransferase (235 aa).

The protein belongs to the transferase hexapeptide repeat family. DapH subfamily.

The catalysed reaction is (S)-2,3,4,5-tetrahydrodipicolinate + acetyl-CoA + H2O = L-2-acetamido-6-oxoheptanedioate + CoA. Its pathway is amino-acid biosynthesis; L-lysine biosynthesis via DAP pathway; LL-2,6-diaminopimelate from (S)-tetrahydrodipicolinate (acetylase route): step 1/3. Its function is as follows. Catalyzes the transfer of an acetyl group from acetyl-CoA to tetrahydrodipicolinate. The chain is 2,3,4,5-tetrahydropyridine-2,6-dicarboxylate N-acetyltransferase from Anoxybacillus flavithermus (strain DSM 21510 / WK1).